Consider the following 665-residue polypeptide: MSLAADNVLLVEEGRPATAEHPSAGPVYRCKYAKDGLLDLPTDIDSPWQFFSEAVKKYPNEQMLGQRVTTDSKVGPYTWITYKEAHDAAIRIGSAIRSRGVDPGHCCGIYGANCPEWIIAMEACMSQGITYVPLYDSLGVNAVEFIINHAEVSLVFVQEKTVSSILSCQKGCSSNLKTIVSFGEVSSTQKEEAKNQCVSLFSWNEFSLMGNLDEANLPRKRKTDICTIMYTSGTTGEPKGVILNNAAISVQVLSIDKMLEVTDRSCDTSDVFFSYLPLAHCYDQVMEIYFLSRGSSVGYWRGDIRYLMDDVQALKPTVFCGVPRVYDKLYAGIMQKISASGLIRKKLFDFAYNYKLGNMRKGFSQEEASPRLDRLMFDKIKEALGGRAHMLLSGAAPLPRHVEEFLRIIPASNLSQGYGLTESCGGSFTTLAGVFSMVGTVGVPMPTVEARLVSVPEMGYDAFSADVPRGEICLRGNSMFSGYHKRQDLTDQVLIDGWFHTGDIGEWQEDGSMKIIDRKKNIFKLSQGEYVAVENLENTYSRCPLIAQIWVYGNSFESFLVGVVVPDRKAIEDWAKLNYQSPNDFESLCQNLKAQKYFLDELNSTAKQYQLKGFEMLKAIHLEPNPFDIERDLITPTFKLKRPQLLQHYKGIVDQLYSEAKRSMA.

228–239 (IMYTSGTTGEPK) lines the ATP pocket. The interval 496-520 (DGWFHTGDIGEWQEDGSMKIIDRKK) is fatty acid-binding.

Belongs to the ATP-dependent AMP-binding enzyme family. The cofactor is Mg(2+). As to expression, expressed along the entire length of the stem, but expression was not entirely epidermal specific, with some expression found in internal cell layers as well. Was expressed in leave epidermal cells, flowers (sepals, petals, stamens, filaments and carpel), siliques and developing seeds. In roots, expression was detected in an internal cell layer, probably the endodermal layer.

The protein localises to the endoplasmic reticulum. The catalysed reaction is a long-chain fatty acid + ATP + CoA = a long-chain fatty acyl-CoA + AMP + diphosphate. Its pathway is lipid metabolism; fatty acid metabolism. In terms of biological role, activation of long-chain fatty acids for both synthesis of cellular lipids, and degradation via beta-oxidation. Acts in the cutin pathway. Preferentially uses palmitate, palmitoleate, oleate and linoleate. Required for repression of lateral root formation through its role in cutin biosynthesis and subsequent aerial tissues permeability. This Arabidopsis thaliana (Mouse-ear cress) protein is Long chain acyl-CoA synthetase 2 (LACS2).